Consider the following 274-residue polypeptide: ATP synthase subunit a (274 aa).

The next 5 membrane-spanning stretches (helical) occupy residues 43–63 (TLNIDSLFFSVVLGILFLYVF), 103–123 (VIAPLALTVFVWVLLMNVMDL), 144–164 (VVPTADVSVTLSMAIGVFVLI), 223–243 (LIFILIAGLLPWWSQWLLSLP), and 245–265 (AIFHILIITLQAFIFMVLTIV).

This sequence belongs to the ATPase A chain family. F-type ATPases have 2 components, CF(1) - the catalytic core - and CF(0) - the membrane proton channel. CF(1) has five subunits: alpha(3), beta(3), gamma(1), delta(1), epsilon(1). CF(0) has three main subunits: a(1), b(2) and c(9-12). The alpha and beta chains form an alternating ring which encloses part of the gamma chain. CF(1) is attached to CF(0) by a central stalk formed by the gamma and epsilon chains, while a peripheral stalk is formed by the delta and b chains.

The protein resides in the cell inner membrane. In terms of biological role, key component of the proton channel; it plays a direct role in the translocation of protons across the membrane. This Photorhabdus laumondii subsp. laumondii (strain DSM 15139 / CIP 105565 / TT01) (Photorhabdus luminescens subsp. laumondii) protein is ATP synthase subunit a.